Consider the following 340-residue polypeptide: MDRTRIVRRWRRNMDVADDAEYVEMLATLSEGSVRRNFNPYTDIDWESPEFAVTDNDPRWILPATDPLGRHPWYQAQSRERQIEIGMWRQANVAKVGLHFESILIRGLMNYTFWMPNGSPEYRYCLHESVEECNHTMMFQEMVNRVGADVPGLPRRLRWVSPLVPLVAGPLPVAFFIGVLAGEEPIDHTQKNVLREGKSLHPIMERVMSIHVAEEARHISFAHEYLRKRLPRLTRMQRFWISLYFPLTMRSLCNAIVVPPKAFWEEFDIPREVKKELFFGSPESRKWLCDMFADARMLAHDTGLMNPIARLVWRLCKIDGKPSRYRSEPQRQHLAAAPAA.

The next 2 membrane-spanning stretches (helical) occupy residues 162 to 182 (PLVP…VLAG) and 239 to 259 (FWIS…IVVP).

It localises to the cell membrane. This is an uncharacterized protein from Mycobacterium bovis (strain ATCC BAA-935 / AF2122/97).